Consider the following 148-residue polypeptide: Large ribosomal subunit protein bL9 (148 aa).

Belongs to the bacterial ribosomal protein bL9 family.

Its function is as follows. Binds to the 23S rRNA. The polypeptide is Large ribosomal subunit protein bL9 (Methylobacillus flagellatus (strain ATCC 51484 / DSM 6875 / VKM B-1610 / KT)).